A 177-amino-acid chain; its full sequence is ATP synthase subunit b (177 aa).

The helical transmembrane segment at 19–39 threads the bilayer; sequence LFPNLPNFIAHVIATIVLVVI.

This sequence belongs to the ATPase B chain family. In terms of assembly, F-type ATPases have 2 components, F(1) - the catalytic core - and F(0) - the membrane proton channel. F(1) has five subunits: alpha(3), beta(3), gamma(1), delta(1), epsilon(1). F(0) has three main subunits: a(1), b(2) and c(10-14). The alpha and beta chains form an alternating ring which encloses part of the gamma chain. F(1) is attached to F(0) by a central stalk formed by the gamma and epsilon chains, while a peripheral stalk is formed by the delta and b chains.

Its subcellular location is the cell membrane. In terms of biological role, f(1)F(0) ATP synthase produces ATP from ADP in the presence of a proton or sodium gradient. F-type ATPases consist of two structural domains, F(1) containing the extramembraneous catalytic core and F(0) containing the membrane proton channel, linked together by a central stalk and a peripheral stalk. During catalysis, ATP synthesis in the catalytic domain of F(1) is coupled via a rotary mechanism of the central stalk subunits to proton translocation. Functionally, component of the F(0) channel, it forms part of the peripheral stalk, linking F(1) to F(0). The polypeptide is ATP synthase subunit b (Mesoplasma florum (strain ATCC 33453 / NBRC 100688 / NCTC 11704 / L1) (Acholeplasma florum)).